We begin with the raw amino-acid sequence, 177 residues long: FMRFamide-like neuropeptides 7 (177 aa).

Positions 1-19 (MLGSRFLLLALGLLVLVLA) are cleaved as a signal peptide. Residues 20-49 (EESAEQQVQEPTELEKSGEQLSEEDLIDEQ) constitute a propeptide that is removed on maturation. Residues 25-106 (QQVQEPTELE…RSSMVRFGKR (82 aa)) are disordered. Phenylalanine 62, phenylalanine 75, phenylalanine 89, phenylalanine 103, phenylalanine 117, and phenylalanine 130 each carry phenylalanine amide. The residue at position 143 (leucine 143) is a Leucine amide. Position 157 is a phenylalanine amide (phenylalanine 157). Positions 161 to 177 (SMEFEMQSNEKNIEDSE) are excised as a propeptide.

This sequence belongs to the FARP (FMRFamide related peptide) family. In terms of tissue distribution, expressed in the ASI sensory neurons, the ALA interneuron and the AVG interneuron from where secretion occurs. Expression in the ASI neurons is necessary and sufficient to maintain serotonin-induced fat loss.

It localises to the secreted. FMRFamide-like neuropeptides. Stimulates serotonin-induced fat loss by binding to and activating the npr-22 receptor which leads to induction of the atgl-1 lipase and subsequent fat loss. Together with atfs-1, negatively regulates the expression of the transcription regulator hlh-11, to promote expression of atgl-1, and thus atgl-1-dependent fat oxidation in response to mitochondrial stress. Its function is as follows. TPMQRSSMVRF-amide: Acts as a ligand for the npr-22 receptor in vitro. In terms of biological role, SPMQRSSMVRF-amide: Acts as a ligand for the npr-22 receptor in vitro. Functionally, acts as a ligand for the npr-22 receptor in vitro. This chain is FMRFamide-like neuropeptides 7, found in Caenorhabditis elegans.